The primary structure comprises 126 residues: Small ribosomal subunit protein uS8 (126 aa).

It belongs to the universal ribosomal protein uS8 family. As to quaternary structure, part of the 30S ribosomal subunit. Contacts proteins S5 and S12.

Its function is as follows. One of the primary rRNA binding proteins, it binds directly to 16S rRNA central domain where it helps coordinate assembly of the platform of the 30S subunit. This is Small ribosomal subunit protein uS8 from Nitratidesulfovibrio vulgaris (strain DSM 19637 / Miyazaki F) (Desulfovibrio vulgaris).